A 347-amino-acid chain; its full sequence is Dual-specificity RNA methyltransferase RlmN (347 aa).

Glutamate 93 serves as the catalytic Proton acceptor. In terms of domain architecture, Radical SAM core spans 99-327 (DEGRNTLCIS…VITRDSRGSD (229 aa)). Cysteine 106 and cysteine 332 are disulfide-bonded. [4Fe-4S] cluster-binding residues include cysteine 113, cysteine 117, and cysteine 120. Residues 158–159 (GE), serine 190, 213–215 (SLN), and asparagine 289 contribute to the S-adenosyl-L-methionine site. The S-methylcysteine intermediate role is filled by cysteine 332.

It belongs to the radical SAM superfamily. RlmN family. [4Fe-4S] cluster is required as a cofactor.

Its subcellular location is the cytoplasm. It catalyses the reaction adenosine(2503) in 23S rRNA + 2 reduced [2Fe-2S]-[ferredoxin] + 2 S-adenosyl-L-methionine = 2-methyladenosine(2503) in 23S rRNA + 5'-deoxyadenosine + L-methionine + 2 oxidized [2Fe-2S]-[ferredoxin] + S-adenosyl-L-homocysteine. The catalysed reaction is adenosine(37) in tRNA + 2 reduced [2Fe-2S]-[ferredoxin] + 2 S-adenosyl-L-methionine = 2-methyladenosine(37) in tRNA + 5'-deoxyadenosine + L-methionine + 2 oxidized [2Fe-2S]-[ferredoxin] + S-adenosyl-L-homocysteine. Functionally, specifically methylates position 2 of adenine 2503 in 23S rRNA and position 2 of adenine 37 in tRNAs. m2A2503 modification seems to play a crucial role in the proofreading step occurring at the peptidyl transferase center and thus would serve to optimize ribosomal fidelity. This Pelobacter propionicus (strain DSM 2379 / NBRC 103807 / OttBd1) protein is Dual-specificity RNA methyltransferase RlmN.